A 459-amino-acid chain; its full sequence is uncharacterized protein (459 aa).

Residues Lys-9–Lys-67 form the TRAM domain. 4 residues coordinate [4Fe-4S] cluster: Cys-80, Cys-86, Cys-89, and Cys-168. Residues Gln-292, Tyr-321, Asp-342, and Asp-390 each contribute to the S-adenosyl-L-methionine site. Cys-417 (nucleophile) is an active-site residue.

The protein belongs to the class I-like SAM-binding methyltransferase superfamily. RNA M5U methyltransferase family.

This is an uncharacterized protein from Bacillus anthracis.